The following is a 106-amino-acid chain: Ig kappa chain C region, A allele (106 aa).

Residues 5–102 (PTVSIFPPSM…SSSPVVKSFN (98 aa)) enclose the Ig-like domain. Cys26 and Cys86 form a disulfide bridge.

The protein is Ig kappa chain C region, A allele of Rattus norvegicus (Rat).